Consider the following 402-residue polypeptide: Putative neuropeptide Y receptor 11 (402 aa).

The Extracellular segment spans residues 1–45 (MGSVNESCDNYVEIFNKINYFFRDDQVINGTEYSPKEFGYFITFA). Residues Asn-5 and Asn-29 are each glycosylated (N-linked (GlcNAc...) asparagine). The helical transmembrane segment at 46 to 66 (YMLIILFGAIGNFLTIIVVIL) threads the bilayer. Residues 67-85 (NPAMRTTRNFFILNLALSD) lie on the Cytoplasmic side of the membrane. The chain crosses the membrane as a helical span at residues 86–106 (FFVCIVTAPTTLYTVLYMFWP). Residues 107–122 (FSRTLCKIAGSLQGFN) are Extracellular-facing. Cys-112 and Cys-194 are disulfide-bonded. The helical transmembrane segment at 123–143 (IFLSTFSIASIAVDRYVLIIF) threads the bilayer. Over 144–152 (PTKRERQQN) the chain is Cytoplasmic. A helical transmembrane segment spans residues 153 to 173 (LSFCFFIMIWVISLILAVPLL). At 174–210 (QASDLTPVFVEPSCDLALYICHEQNEIWEKMIISKGT) the chain is on the extracellular side. A helical membrane pass occupies residues 211 to 231 (YTLAVLITQYAFPLFSLVFAY). At 232-272 (SRIAHRMKLRFANRNQNVTTNTNTSQRRRSVVERQRRTHLL) the chain is on the cytoplasmic side. A helical membrane pass occupies residues 273–293 (LVCVVAVFAVAWLPLNVFHIF). Residues 294 to 306 (NTFELVNSFSVTT) are Extracellular-facing. The chain crosses the membrane as a helical span at residues 307–328 (FSICHCLAMCSACLNPLIYAFF). Over 329 to 402 (NHNFRIEFMH…LSAMEQDEQL (74 aa)) the chain is Cytoplasmic.

It belongs to the G-protein coupled receptor 1 family.

Its subcellular location is the cell membrane. Its function is as follows. Could be a receptor for neuropeptide Y and peptide YY. In Caenorhabditis elegans, this protein is Putative neuropeptide Y receptor 11 (npr-11).